Here is a 205-residue protein sequence, read N- to C-terminus: Golgi to ER traffic protein 1 (205 aa).

The Lumenal segment spans residues M1 to Y3. Residues W4–L24 traverse the membrane as a helical segment. Residues A25–K96 are Cytoplasmic-facing. Positions E32–K96 form a coiled coil. Residues L97–Y117 form a helical membrane-spanning segment. Topologically, residues A118–A156 are lumenal. Residues V157–I173 form a helical membrane-spanning segment. At E174 to N205 the chain is on the cytoplasmic side.

This sequence belongs to the WRB/GET1 family. Component of the Golgi to ER traffic (GET) complex, which is composed of GET1, GET2 and GET3. Within the complex, GET1 and GET2 form a heterotetramer which is stabilized by phosphatidylinositol binding and which binds to the GET3 homodimer.

It is found in the endoplasmic reticulum membrane. It localises to the golgi apparatus membrane. Functionally, required for the post-translational delivery of tail-anchored (TA) proteins to the endoplasmic reticulum. Together with GET2, acts as a membrane receptor for soluble GET3, which recognizes and selectively binds the transmembrane domain of TA proteins in the cytosol. The GET complex cooperates with the HDEL receptor ERD2 to mediate the ATP-dependent retrieval of resident ER proteins that contain a C-terminal H-D-E-L retention signal from the Golgi to the ER. This Eremothecium gossypii (strain ATCC 10895 / CBS 109.51 / FGSC 9923 / NRRL Y-1056) (Yeast) protein is Golgi to ER traffic protein 1.